A 675-amino-acid polypeptide reads, in one-letter code: Pesticidal crystal protein Cry25Aa (675 aa).

The protein belongs to the delta endotoxin family.

Its function is as follows. Promotes colloidosmotic lysis by binding to the midgut epithelial cells of insects. This Bacillus thuringiensis subsp. jegathesan protein is Pesticidal crystal protein Cry25Aa (cry25Aa).